The primary structure comprises 516 residues: Homeobox protein 6 (516 aa).

Over residues 22–31 (NYDFDNKNNS) the composition is skewed to low complexity. Disordered stretches follow at residues 22–140 (NYDF…PNCN), 200–256 (SLNN…SSPS), and 268–348 (DEND…NNGD). Positions 32 to 41 (IGGGGGGGGS) are enriched in gly residues. Composition is skewed to low complexity over residues 42 to 59 (SSSR…SSSG), 66 to 78 (SNSS…IINS), and 101 to 132 (TTTT…NSSS). Residues 284-346 (NNNNNNNNNN…NNNNTNTNNN (63 aa)) are compositionally biased toward low complexity. DNA-binding regions (homeobox) lie at residues 362–421 (KSGQ…SKSG) and 424–483 (SYAK…NKLS). Residues 483-516 (SSKAIQDKDNQDNDNNNSNNNENNDDSYSDEGLF) are disordered. Low complexity predominate over residues 495 to 504 (NDNNNSNNNE). Residues 505 to 516 (NNDDSYSDEGLF) are compositionally biased toward acidic residues.

Its subcellular location is the nucleus. Functionally, putative transcription factor. The protein is Homeobox protein 6 (hbx6) of Dictyostelium discoideum (Social amoeba).